A 251-amino-acid polypeptide reads, in one-letter code: Triosephosphate isomerase (251 aa).

N9–K11 provides a ligand contact to substrate. Residue H95 is the Electrophile of the active site. E167 (proton acceptor) is an active-site residue. Residues G173, S213, and G234–G235 contribute to the substrate site.

This sequence belongs to the triosephosphate isomerase family. In terms of assembly, homodimer.

It is found in the cytoplasm. It catalyses the reaction D-glyceraldehyde 3-phosphate = dihydroxyacetone phosphate. Its pathway is carbohydrate biosynthesis; gluconeogenesis. The protein operates within carbohydrate degradation; glycolysis; D-glyceraldehyde 3-phosphate from glycerone phosphate: step 1/1. Its function is as follows. Involved in the gluconeogenesis. Catalyzes stereospecifically the conversion of dihydroxyacetone phosphate (DHAP) to D-glyceraldehyde-3-phosphate (G3P). The sequence is that of Triosephosphate isomerase from Lactobacillus gasseri (strain ATCC 33323 / DSM 20243 / BCRC 14619 / CIP 102991 / JCM 1131 / KCTC 3163 / NCIMB 11718 / NCTC 13722 / AM63).